We begin with the raw amino-acid sequence, 112 residues long: Urocortin-2 (112 aa).

A signal peptide spans M1 to V22. Positions T23 to S70 are excised as a propeptide. The tract at residues T27–R66 is disordered. Low complexity predominate over residues T38–A58.

This sequence belongs to the sauvagine/corticotropin-releasing factor/urotensin I family. Binds with high affinity to CRF receptors 2-alpha and 2-beta. In terms of processing, glycosylated.

Its subcellular location is the secreted. Suppresses food intake, delays gastric emptying and decreases heat-induced edema. Might represent an endogenous ligand for maintaining homeostasis after stress. In Homo sapiens (Human), this protein is Urocortin-2 (UCN2).